The primary structure comprises 421 residues: Immunoglobulin heavy constant epsilon (421 aa).

4 Ig-like domains span residues 5-97, 99-184, 201-301, and 310-410; these read PQLY…VNIT, PTLE…KVTS, PRGV…RSIT, and PEVY…KTIS. The cysteines at positions 23 and 75 are disulfide-linked. N-linked (GlcNAc...) asparagine glycans are attached at residues N43, N72, N84, N95, N166, N238, N261, N365, and N415. Intrachain disulfides connect C121-C180, C226-C285, and C330-C392.

In terms of assembly, the basic structural unit consists of two identical heavy chains and two identical light chains; disulfide-linked. N-terminal variable regions of the heavy and light chains form the antigen binding sites, whereas the C-terminal constant regions of the heavy chains interact with immune receptors to mediate effector functions.

The protein resides in the secreted. The protein localises to the cell membrane. In terms of biological role, constant region of immunoglobulin heavy chains. Immunoglobulins, also known as antibodies, are membrane-bound or secreted glycoproteins produced by B lymphocytes. In the recognition phase of humoral immunity, the membrane-bound immunoglobulins serve as receptors which, upon binding of a specific antigen, trigger the clonal expansion and differentiation of B lymphocytes into immunoglobulins-secreting plasma cells. Secreted immunoglobulins mediate the effector phase of humoral immunity, which results in the elimination of bound antigens. The antigen binding site is formed by the variable domain of one heavy chain, together with that of its associated light chain. Thus, each immunoglobulin has two antigen binding sites with remarkable affinity for a particular antigen. The variable domains are assembled by a process called V-(D)-J rearrangement and can then be subjected to somatic hypermutations which, after exposure to antigen and selection, allow affinity maturation for a particular antigen. The chain is Immunoglobulin heavy constant epsilon from Mus musculus (Mouse).